Here is a 352-residue protein sequence, read N- to C-terminus: Ly6/PLAUR domain-containing protein 3 (352 aa).

The first 32 residues, 1-32 (MDAARRGDTQPVMWTTRWLLLLPLLLCEGAQA), serve as a signal peptide directing secretion. Residues 35 to 128 (CYSCVQKADD…LNLTLRGLNP (94 aa)) form the UPAR/Ly6 1 domain. N-linked (GlcNAc...) asparagine glycosylation is found at asparagine 120, asparagine 131, asparagine 178, and asparagine 185. The region spanning 142-224 (CYSCMGLSRE…GSCCQGPRCN (83 aa)) is the UPAR/Ly6 2 domain. The segment covering 236–249 (RIPPLVLLPPPTTP) has biased composition (pro residues). A disordered region spans residues 236–330 (RIPPLVLLPP…KGGAQIPSKG (95 aa)). Over residues 250–285 (APSTRTQNSSSTTSTTAPTTATTTIKPTTVQASHTS) the composition is skewed to low complexity. 2 stretches are compositionally biased toward basic and acidic residues: residues 286–300 (STHE…EEGS) and 309–320 (HQDRSNMGKFPE). Glycine 330 is lipidated: GPI-anchor amidated glycine. A propeptide spans 331-352 (GSDALGSWLSAILLTVVAGAML) (removed in mature form).

As to quaternary structure, interacts with AGR2 and AGR3. Binds laminin-1 and laminin-5. Interacts with LGALS3. Found predominantly on the basal layers of squamous epithelium. Expressed in the gravid uterus and on epithelial of the upper gastrointestinal tract. It has been found in tumor lines which metastasize via the lymphatic system.

The protein localises to the cell membrane. Supports cell migration. May be involved in tumor progression. This Rattus norvegicus (Rat) protein is Ly6/PLAUR domain-containing protein 3 (Lypd3).